We begin with the raw amino-acid sequence, 279 residues long: NH(3)-dependent NAD(+) synthetase (279 aa).

39–46 (GLSGGIDS) lines the ATP pocket. Asp-45 contributes to the Mg(2+) binding site. Deamido-NAD(+) is bound at residue Arg-122. ATP is bound at residue Thr-142. Glu-147 provides a ligand contact to Mg(2+). Deamido-NAD(+) contacts are provided by Lys-155 and Asp-162. 2 residues coordinate ATP: Lys-171 and Ser-193. Deamido-NAD(+) is bound at residue 253–254 (HK).

Belongs to the NAD synthetase family. In terms of assembly, homodimer.

The enzyme catalyses deamido-NAD(+) + NH4(+) + ATP = AMP + diphosphate + NAD(+) + H(+). The protein operates within cofactor biosynthesis; NAD(+) biosynthesis; NAD(+) from deamido-NAD(+) (ammonia route): step 1/1. Catalyzes the ATP-dependent amidation of deamido-NAD to form NAD. Uses ammonia as a nitrogen source. This Sulfolobus acidocaldarius (strain ATCC 33909 / DSM 639 / JCM 8929 / NBRC 15157 / NCIMB 11770) protein is NH(3)-dependent NAD(+) synthetase.